Consider the following 299-residue polypeptide: Acetylglutamate kinase (299 aa).

Substrate contacts are provided by residues 66 to 67 (GG), Arg88, and Asn196.

It belongs to the acetylglutamate kinase family. ArgB subfamily.

The protein resides in the cytoplasm. The catalysed reaction is N-acetyl-L-glutamate + ATP = N-acetyl-L-glutamyl 5-phosphate + ADP. It functions in the pathway amino-acid biosynthesis; L-arginine biosynthesis; N(2)-acetyl-L-ornithine from L-glutamate: step 2/4. Its function is as follows. Catalyzes the ATP-dependent phosphorylation of N-acetyl-L-glutamate. This chain is Acetylglutamate kinase, found in Alcanivorax borkumensis (strain ATCC 700651 / DSM 11573 / NCIMB 13689 / SK2).